Consider the following 141-residue polypeptide: MELDLINEHKIGVTKGTELEKEVQANFEGECKEVGLYLAMARQAQREGLPEVAEVLIRIAMEEAQHAAHFAEMNGLISENLKENIEMMLKGECMANKEKKAAATKAKELGIDPAHDFFDESSRDEARHAKMLKGILDRYFK.

The 129-residue stretch at valine 13–lysine 141 folds into the Ferritin-like diiron domain. 4 residues coordinate Fe cation: glutamate 63, histidine 66, glutamate 125, and histidine 128.

This is an uncharacterized protein from Methanocaldococcus jannaschii (strain ATCC 43067 / DSM 2661 / JAL-1 / JCM 10045 / NBRC 100440) (Methanococcus jannaschii).